The following is a 291-amino-acid chain: 4-hydroxy-tetrahydrodipicolinate synthase (291 aa).

Threonine 45 is a binding site for pyruvate. Catalysis depends on tyrosine 133, which acts as the Proton donor/acceptor. Lysine 161 acts as the Schiff-base intermediate with substrate in catalysis. Residue isoleucine 203 participates in pyruvate binding.

The protein belongs to the DapA family. As to quaternary structure, homotetramer; dimer of dimers.

It localises to the cytoplasm. The catalysed reaction is L-aspartate 4-semialdehyde + pyruvate = (2S,4S)-4-hydroxy-2,3,4,5-tetrahydrodipicolinate + H2O + H(+). It functions in the pathway amino-acid biosynthesis; L-lysine biosynthesis via DAP pathway; (S)-tetrahydrodipicolinate from L-aspartate: step 3/4. In terms of biological role, catalyzes the condensation of (S)-aspartate-beta-semialdehyde [(S)-ASA] and pyruvate to 4-hydroxy-tetrahydrodipicolinate (HTPA). In Acidithiobacillus ferrooxidans (strain ATCC 23270 / DSM 14882 / CIP 104768 / NCIMB 8455) (Ferrobacillus ferrooxidans (strain ATCC 23270)), this protein is 4-hydroxy-tetrahydrodipicolinate synthase.